The sequence spans 915 residues: Metabotropic glutamate receptor 7 (915 aa).

An N-terminal signal peptide occupies residues 1-34 (MVQLRKLLRVLTLMKFPCCVLEVLLCALAAAARG). Residues 35–590 (QEMYAPHSIR…IIKLEWHSPW (556 aa)) lie on the Extracellular side of the membrane. A disulfide bridge links Cys-67 with Cys-109. A glycan (N-linked (GlcNAc...) asparagine) is linked at Asn-98. Residues Ser-159, 180–182 (AST), Tyr-230, and Asp-314 each bind L-glutamate. 7 cysteine pairs are disulfide-bonded: Cys-249–Cys-541, Cys-374–Cys-390, Cys-430–Cys-437, Cys-523–Cys-542, Cys-527–Cys-545, Cys-548–Cys-560, and Cys-563–Cys-576. Lys-407 contacts L-glutamate. 2 N-linked (GlcNAc...) asparagine glycosylation sites follow: Asn-458 and Asn-486. Asn-572 carries an N-linked (GlcNAc...) asparagine glycan. The helical transmembrane segment at 591–615 (AVIPVFLAMLGIIATIFVMATFIRY) threads the bilayer. Residues 616-627 (NDTPIVRASGRE) lie on the Cytoplasmic side of the membrane. A helical membrane pass occupies residues 628–648 (LSYVLLTGIFLCYIITFLMIA). At 649–654 (KPDVAV) the chain is on the extracellular side. Residues 655–675 (CSFRRVFLGLGMCISYAALLT) traverse the membrane as a helical segment. Over 676–702 (KTNRIYRIFEQGKKSVTAPRLISPTSQ) the chain is Cytoplasmic. Residues 703 to 723 (LAITSSLISVQLLGVFIWFGV) form a helical membrane-spanning segment. The Extracellular portion of the chain corresponds to 724–753 (DPPNIIIDYDEHKTMNPEQARGVLKCDITD). Residues 754–775 (LQIICSLGYSILLMVTCTVYAI) form a helical membrane-spanning segment. Residues 776–788 (KTRGVPENFNEAK) lie on the Cytoplasmic side of the membrane. A helical transmembrane segment spans residues 789–810 (PIGFTMYTTCIVWLAFIPIFFG). The Extracellular segment spans residues 811-825 (TAQSAEKLYIQTTTL). Residues 826–850 (TISMNLSASVALGMLYMPKVYIIIF) traverse the membrane as a helical segment. The Cytoplasmic portion of the chain corresponds to 851–915 (HPELNVQKRK…KYVSYNNLVI (65 aa)). The disordered stretch occupies residues 874-895 (SRLSHKPSDRPNGEAKTELCEN). The segment covering 879–892 (KPSDRPNGEAKTEL) has biased composition (basic and acidic residues). A Phosphoserine modification is found at Ser-900.

It belongs to the G-protein coupled receptor 3 family. In terms of assembly, homodimer. Interacts with PICK1. N-glycosylated. As to expression, expressed in many areas of the brain, especially in the cerebral cortex, hippocampus, and cerebellum. Expression of GRM7 isoforms in non-neuronal tissues appears to be restricted to isoform 3 and isoform 4.

It localises to the cell membrane. G-protein coupled receptor activated by glutamate that regulates axon outgrowth through the MAPK-cAMP-PKA signaling pathway during neuronal development. Ligand binding causes a conformation change that triggers signaling via guanine nucleotide-binding proteins (G proteins) and modulates the activity of downstream effectors, such as adenylate cyclase that it inhibits. This is Metabotropic glutamate receptor 7 (GRM7) from Homo sapiens (Human).